The sequence spans 480 residues: MVRVRFAPSPTGPLHIGGARSALFNYLFARKNNGVFIVRIEDTDLERSSRESEKNILESLKWLGITWDEGIEVGGENGPYRQTERLDLYQKYAQKLIEEGFAYYCFCTEEELEEERKNLLAKGEMPRYLGKCRNLTPEQKEKYLAEGRKPTVRFKVPAGRTIVINDLVRGVVSFETDGIGDFIIVKSDGIPTYNFAVVIDDVTMGITHVLRGEEHLSNTPRQILIYEALGFKIPEFAHISLILGKDRTKMSKRHGATSVENYREKGYLPEALVNFLALLGWSPGTEEEIFTMEQLIERFSLDRVAKNPAIFDLDKLNWINGYYIRNSELSRIVELSLPFFQSCGYVSQNPTEEEMRKLTKVVEATREYVVTLSELPEHAAIFYQKELAFEEEAKTLLADEEARNILRKVADKLREIPGSEEEEIKGFLKKLPKELGVGGKKVYMPLRAALTGKTHGPELYQVIAILGPAEAERRIMNLFN.

Residues 8–18 (PSPTGPLHIGG) carry the 'HIGH' region motif. The 'KMSKS' region signature appears at 249–253 (KMSKR). ATP is bound at residue lysine 252.

It belongs to the class-I aminoacyl-tRNA synthetase family. Glutamate--tRNA ligase type 1 subfamily. In terms of assembly, monomer.

Its subcellular location is the cytoplasm. The catalysed reaction is tRNA(Glu) + L-glutamate + ATP = L-glutamyl-tRNA(Glu) + AMP + diphosphate. Catalyzes the attachment of glutamate to tRNA(Glu) in a two-step reaction: glutamate is first activated by ATP to form Glu-AMP and then transferred to the acceptor end of tRNA(Glu). This chain is Glutamate--tRNA ligase, found in Carboxydothermus hydrogenoformans (strain ATCC BAA-161 / DSM 6008 / Z-2901).